A 445-amino-acid polypeptide reads, in one-letter code: Gastrula zinc finger protein 5-1 (445 aa).

Positions 1 to 38 (MLQIKTEKEELDCGDDQNPKESSAVPLTDGASPEPQPQ) are disordered. Phosphoserine; by CK2 is present on Ser89. Residues 185–210 (FICCKCGDSFAHHSDLHTHLYACAGH) form a C2H2-type 1; atypical zinc finger. 7 C2H2-type zinc fingers span residues 239–261 (FKCT…HRIH), 267–289 (FTCT…SRTH), 295–317 (YVCT…MRTH), 323–345 (YACK…QNSH), 351–373 (FICT…QRTH), 379–401 (FICS…QMIH), and 407–429 (FSCS…QRVH).

Binds to RNA homomers. This chain is Gastrula zinc finger protein 5-1, found in Xenopus laevis (African clawed frog).